The following is a 62-amino-acid chain: MTIAFQSSVFALIAISTLLVIGVPVALASPNGWSSNKNVLFSGVSLWIGSVFLVGILNSFIS.

2 helical membrane passes run 8–28 (SVFA…VALA) and 41–61 (FSGV…NSFI).

The protein belongs to the PsbZ family. PSII is composed of 1 copy each of membrane proteins PsbA, PsbB, PsbC, PsbD, PsbE, PsbF, PsbH, PsbI, PsbJ, PsbK, PsbL, PsbM, PsbT, PsbY, PsbZ, Psb30/Ycf12, at least 3 peripheral proteins of the oxygen-evolving complex and a large number of cofactors. It forms dimeric complexes.

The protein localises to the plastid. The protein resides in the chloroplast thylakoid membrane. Its function is as follows. May control the interaction of photosystem II (PSII) cores with the light-harvesting antenna, regulates electron flow through the 2 photosystem reaction centers. PSII is a light-driven water plastoquinone oxidoreductase, using light energy to abstract electrons from H(2)O, generating a proton gradient subsequently used for ATP formation. This chain is Photosystem II reaction center protein Z, found in Cryptomeria japonica (Japanese cedar).